The following is a 107-amino-acid chain: Death-associated protein-like 1 (107 aa).

The interval 1 to 26 is disordered; that stretch reads MANEVQVQLSPLKGGHPPAVKAGGKR.

As to expression, detected in the corneal epithelium, and only in trace amounts in the liver, bladder, brain, heart, and stomach.

In terms of biological role, may play a role in the early stages of epithelial differentiation or in apoptosis. In Bos taurus (Bovine), this protein is Death-associated protein-like 1 (DAPL1).